The sequence spans 502 residues: Glycerol kinase (502 aa).

An ADP-binding site is contributed by Thr-14. Thr-14, Thr-15, and Ser-16 together coordinate ATP. Thr-14 contributes to the sn-glycerol 3-phosphate binding site. Residue Arg-18 participates in ADP binding. Positions 84, 85, 136, and 246 each coordinate sn-glycerol 3-phosphate. The glycerol site is built by Arg-84, Glu-85, Tyr-136, Asp-246, and Gln-247. ADP-binding residues include Thr-268 and Gly-311. Positions 268, 311, 315, and 412 each coordinate ATP. Gly-412 and Asn-416 together coordinate ADP.

Belongs to the FGGY kinase family. In terms of assembly, homotetramer and homodimer (in equilibrium). Heterodimer with EIIA-Glc. Binds 1 zinc ion per glycerol kinase EIIA-Glc dimer. The zinc ion is important for dimerization.

The catalysed reaction is glycerol + ATP = sn-glycerol 3-phosphate + ADP + H(+). It functions in the pathway polyol metabolism; glycerol degradation via glycerol kinase pathway; sn-glycerol 3-phosphate from glycerol: step 1/1. Activity of this regulatory enzyme is affected by several metabolites. Allosterically and non-competitively inhibited by fructose 1,6-bisphosphate (FBP) and unphosphorylated phosphocarrier protein EIIA-Glc (III-Glc), an integral component of the bacterial phosphotransferase (PTS) system. Functionally, key enzyme in the regulation of glycerol uptake and metabolism. Catalyzes the phosphorylation of glycerol to yield sn-glycerol 3-phosphate. The sequence is that of Glycerol kinase from Escherichia coli (strain ATCC 8739 / DSM 1576 / NBRC 3972 / NCIMB 8545 / WDCM 00012 / Crooks).